The chain runs to 242 residues: Ditrans,polycis-undecaprenyl-diphosphate synthase ((2E,6E)-farnesyl-diphosphate specific) (242 aa).

Residue D21 is part of the active site. Mg(2+) is bound at residue D21. Substrate contacts are provided by residues 22–25, W26, R34, H38, and 66–68; these read GNGR and SSE. N69 (proton acceptor) is an active-site residue. Substrate-binding positions include W70, R72, R189, and 195-197; that span reads RIS. E208 serves as a coordination point for Mg(2+).

It belongs to the UPP synthase family. Homodimer. Mg(2+) serves as cofactor.

The catalysed reaction is 8 isopentenyl diphosphate + (2E,6E)-farnesyl diphosphate = di-trans,octa-cis-undecaprenyl diphosphate + 8 diphosphate. In terms of biological role, catalyzes the sequential condensation of isopentenyl diphosphate (IPP) with (2E,6E)-farnesyl diphosphate (E,E-FPP) to yield (2Z,6Z,10Z,14Z,18Z,22Z,26Z,30Z,34E,38E)-undecaprenyl diphosphate (di-trans,octa-cis-UPP). UPP is the precursor of glycosyl carrier lipid in the biosynthesis of bacterial cell wall polysaccharide components such as peptidoglycan and lipopolysaccharide. The protein is Ditrans,polycis-undecaprenyl-diphosphate synthase ((2E,6E)-farnesyl-diphosphate specific) of Haemophilus ducreyi (strain 35000HP / ATCC 700724).